Consider the following 179-residue polypeptide: Iron sulfur cluster assembly protein 1, mitochondrial (179 aa).

The segment at 160-179 (RSVKQPTLGPEAAQAETIAT) is disordered.

The protein belongs to the NifU family. Component of the core Fe-S cluster (ISC) assembly machinery. [2Fe-2S] cluster is required as a cofactor.

The protein localises to the mitochondrion matrix. The protein operates within cofactor biosynthesis; iron-sulfur cluster biosynthesis. In terms of biological role, scaffold protein for the de novo synthesis of iron-sulfur (Fe-S) clusters within mitochondria, which is required for maturation of both mitochondrial and cytoplasmic [2Fe-2S] and [4Fe-4S] proteins. First, a [2Fe-2S] cluster is transiently assembled on the scaffold protein ISU1. In a second step, the cluster is released from ISU1, transferred to a glutaredoxin, followed by the formation of mitochondrial [2Fe-2S] proteins, the synthesis of [4Fe-4S] clusters and their target-specific insertion into the recipient apoproteins. Cluster assembly on ISU1 depends on the function of the cysteine desulfurase complex NFS1-ISD11, which serves as the sulfur donor for cluster synthesis, the iron-binding protein frataxin as the putative iron donor, and the electron transfer chain comprised of ferredoxin reductase and ferredoxin, which receive their electrons from NADH. This Debaryomyces hansenii (strain ATCC 36239 / CBS 767 / BCRC 21394 / JCM 1990 / NBRC 0083 / IGC 2968) (Yeast) protein is Iron sulfur cluster assembly protein 1, mitochondrial (ISU1).